A 463-amino-acid polypeptide reads, in one-letter code: uncharacterized protein (463 aa).

A run of 12 helical transmembrane segments spans residues 21-40, 50-72, 84-104, 112-132, 156-176, 186-206, 237-257, 271-291, 311-331, 334-354, 367-387, and 408-428; these read DFAC…FFYT, AGTM…GTIV, PYLL…FTTP, LIYA…INVP, LFAN…AAYL, GWQL…IFCF, LVVL…SNSV, LVKW…PFIP, IIGL…ILVC, IAAA…PETI, GLIY…GGVV, and LMGI…LALI.

This sequence belongs to the sodium:galactoside symporter (TC 2.A.2) family.

The protein resides in the cell membrane. This is an uncharacterized protein from Bacillus subtilis (strain 168).